Reading from the N-terminus, the 1040-residue chain is MSYFLASCLGVGLLSTVSCSLQGLTSHYRENIPRFKHVANERYEVFLGDEIKFDCQTAASKISAFVEWYRNDKLLKNDQIDKDKIRKDNNRMMLHLKNIDVSDQGLWSCRVHNAYGQISRNFTVEVIDFCDYFLFPDIHHLNIPMECVCLWKYNKEAKRSDVNYAAVTGEVCSKYASRMINRARKPLPMIPCFGDHCKEFDTTPVSDFGLPGKPEDDPLVKRVVLKKDDVIVPVHDSEESPSESRTEFINADEKENKEDEEEDYSVSQPVAPDAGLTELNITAEEPPYFKSNDNIVLFNETHALPAGRTLKLNCRAKGYPEPQIIWYKNGKMLKKSSARSGGYEFKFNRWSLEVEDAVVADSGEFHCEALNKVGSAKKYFHVIIVNRMRRPPIIVPNILANQSVNINDTATFHCKVVSDLLPHIIWVRINKINGSYSYYNNSAEEYMFNYTEMDTFDKAHVHHVGDESTLTIFNVSLDDQGIYACLSGNSLGMSMANATLTVNEFMAIHLLTGDEPKIDRWTTSDYIFTTILLFLLLAATLFGILFMVCKQTLHKKGFMDDTVGLVARKKRVVVSKRPMNEDNENSDDEPSPYQIQIIETPITKKEAARKQRKRMNSENTVLSEYEVDSDPVWEVERSKLSLVHMLGEGAFGEVWKATYKETENNEIAVAVKKLKMSAHEKELIDLVSEMETFKVIGEHENVLRLIGCCTGAGPLYVVVELCKHGNLRDFLRAHRPKEEKAKKSSQELTDYLEPRKASDKDDIELIPNLTQRHLVQFAWQVAQGMNFLASKKIIHRDLAARNVLVGDGHVLKISDFGLSRDVHCNDYYRKRGNGRLPIKWMALEALDSNVYTVESDVWSYGVLLWEIMTLGGTPYPTIAMPELYANLKEGYRMEPPHLCPQEVYHLMCSCWREKLEERPSFKTIVDYLDWMLTMTNETIEGSQEFNDQFFSERSTASGPVSPMESFQKKRKHRPLSAPVNLPSEPQHTICDDYESNFSVEPPNDPNHLYCNDNMLKNHIITPETSQRIPSNNNSMSKPEF.

The first 19 residues, 1–19 (MSYFLASCLGVGLLSTVSC), serve as a signal peptide directing secretion. Over 20–525 (SLQGLTSHYR…PKIDRWTTSD (506 aa)) the chain is Extracellular. The Ig-like C2-type 1 domain occupies 33-125 (PRFKHVANER…GQISRNFTVE (93 aa)). Cys-55 and Cys-109 are joined by a disulfide. N-linked (GlcNAc...) asparagine glycosylation is present at Asn-121. Over residues 234-257 (VHDSEESPSESRTEFINADEKENK) the composition is skewed to basic and acidic residues. The interval 234–267 (VHDSEESPSESRTEFINADEKENKEDEEEDYSVS) is disordered. N-linked (GlcNAc...) asparagine glycosylation is found at Asn-280 and Asn-299. 2 Ig-like C2-type domains span residues 287 to 383 (PYFK…FHVI) and 391 to 501 (PPII…ATLT). A disulfide bond links Cys-314 and Cys-367. N-linked (GlcNAc...) asparagine glycans are attached at residues Asn-401, Asn-407, Asn-433, Asn-440, Asn-449, Asn-474, and Asn-497. Cys-414 and Cys-485 are oxidised to a cystine. A helical transmembrane segment spans residues 526-549 (YIFTTILLFLLLAATLFGILFMVC). The Cytoplasmic portion of the chain corresponds to 550–1040 (KQTLHKKGFM…NNNSMSKPEF (491 aa)). Positions 640-931 (LSLVHMLGEG…KTIVDYLDWM (292 aa)) constitute a Protein kinase domain. Residues 646–654 (LGEGAFGEV) and Lys-672 contribute to the ATP site. Asp-797 acts as the Proton acceptor in catalysis. Tyr-828 bears the Phosphotyrosine; by autocatalysis mark. Disordered regions lie at residues 952-984 (ERSTASGPVSPMESFQKKRKHRPLSAPVNLPSE) and 1021-1040 (TPETSQRIPSNNNSMSKPEF). The span at 1022 to 1040 (PETSQRIPSNNNSMSKPEF) shows a compositional bias: polar residues.

It belongs to the protein kinase superfamily. Tyr protein kinase family. Fibroblast growth factor receptor subfamily. It depends on Mg(2+) as a cofactor. Activity is regulated by the phosphatase clr-1, however it is not known whether clr-1 acts directly on egl-15.

It is found in the membrane. The enzyme catalyses L-tyrosyl-[protein] + ATP = O-phospho-L-tyrosyl-[protein] + ADP + H(+). In terms of biological role, receptor tyrosine kinase required for larval development. May phosphorylate adapter protein soc-1 which in turn may result in the recruitment and/or activation of phosphatase ptp-2. May activate the Ras/MAPK kinase signaling pathway which includes sem-5, sos-1, let-60/Ras, lin-45/Raf, mek-2 and mpk-1. Acts in the hypodermis to regulate axon growth and fluid homeostasis. Activates protein degradation in muscles. Probably following interaction with ligand let-756, negatively regulates membrane protrusion from body wall muscles during larval development. Plays a role in nicotinic acetylcholine receptor (nAChR)-mediated sensitivity to nicotine. Regulates synaptic levels of nAChR subunit lev-1 in the nerve cord. Its function is as follows. Affects the maintenance of axon position without affecting axon growth. Interaction with egl-17 is required for the guidance of sex myoblast migration during gonad development. Functionally, interaction with let-756 appears to play a role in maintaining body morphology at higher temperatures. In Caenorhabditis elegans, this protein is Myoblast growth factor receptor egl-15 (egl-15).